Consider the following 197-residue polypeptide: MIPDEIPYKAVVNIENIVATVTLDQTLDLYAMERSVPNVEYDPDQFPGLIFRLESPKITSLIFKSGKMVVTGAKSTDELIKAVKRIIKTLKKYGMQLTGKPKIQIQNIVASANLHVIVNLDKAAFLLENNMYEPEQFPGLIYRMDEPRVVLLIFSSGKMVITGAKREDEVHKAVKKIFDKLVELDCVKPVEEEELEF.

A run of 2 repeats spans residues 14–90 (IENI…IKTL) and 105–181 (IQNI…FDKL).

The protein belongs to the TBP family.

Functionally, general factor that plays a role in the activation of archaeal genes transcribed by RNA polymerase. Binds specifically to the TATA box promoter element which lies close to the position of transcription initiation. The polypeptide is TATA-box-binding protein (tbp) (Sulfolobus acidocaldarius (strain ATCC 33909 / DSM 639 / JCM 8929 / NBRC 15157 / NCIMB 11770)).